Consider the following 333-residue polypeptide: Glycerol-3-phosphate dehydrogenase [NAD(P)+] (333 aa).

NADPH is bound by residues tryptophan 12, lysine 33, and lysine 105. The sn-glycerol 3-phosphate site is built by lysine 105, glycine 136, and serine 138. Alanine 140 lines the NADPH pocket. Lysine 191, aspartate 244, serine 254, arginine 255, and asparagine 256 together coordinate sn-glycerol 3-phosphate. The active-site Proton acceptor is the lysine 191. Arginine 255 is a binding site for NADPH. Positions 279 and 281 each coordinate NADPH.

Belongs to the NAD-dependent glycerol-3-phosphate dehydrogenase family.

The protein localises to the cytoplasm. It catalyses the reaction sn-glycerol 3-phosphate + NAD(+) = dihydroxyacetone phosphate + NADH + H(+). The enzyme catalyses sn-glycerol 3-phosphate + NADP(+) = dihydroxyacetone phosphate + NADPH + H(+). The protein operates within membrane lipid metabolism; glycerophospholipid metabolism. Catalyzes the reduction of the glycolytic intermediate dihydroxyacetone phosphate (DHAP) to sn-glycerol 3-phosphate (G3P), the key precursor for phospholipid synthesis. The chain is Glycerol-3-phosphate dehydrogenase [NAD(P)+] from Protochlamydia amoebophila (strain UWE25).